A 94-amino-acid chain; its full sequence is CRISPR-associated endoribonuclease Cas2 (94 aa).

Residue aspartate 10 coordinates Mg(2+).

Belongs to the CRISPR-associated endoribonuclease Cas2 protein family. In terms of assembly, homodimer, forms a heterotetramer with a Cas1 homodimer. Mg(2+) serves as cofactor.

CRISPR (clustered regularly interspaced short palindromic repeat), is an adaptive immune system that provides protection against mobile genetic elements (viruses, transposable elements and conjugative plasmids). CRISPR clusters contain sequences complementary to antecedent mobile elements and target invading nucleic acids. CRISPR clusters are transcribed and processed into CRISPR RNA (crRNA). Functions as a ssRNA-specific endoribonuclease. Involved in the integration of spacer DNA into the CRISPR cassette. The chain is CRISPR-associated endoribonuclease Cas2 from Leptospira interrogans serogroup Icterohaemorrhagiae serovar Lai (strain 56601).